The sequence spans 197 residues: Transcription factor FapR (197 aa).

This sequence belongs to the FapR family.

In terms of biological role, transcriptional factor involved in regulation of membrane lipid biosynthesis by repressing genes involved in fatty acid and phospholipid metabolism. In Bacillus cereus (strain B4264), this protein is Transcription factor FapR.